The following is a 233-amino-acid chain: Probable dihydroorotate dehydrogenase B (NAD(+)), electron transfer subunit (233 aa).

In terms of domain architecture, FAD-binding FR-type spans Met1–Lys87. The [2Fe-2S] cluster site is built by Cys202, Cys207, Cys210, and Cys218.

It belongs to the PyrK family. In terms of assembly, heterotetramer of 2 PyrK and 2 PyrD type B subunits. [2Fe-2S] cluster serves as cofactor. FAD is required as a cofactor.

The protein operates within pyrimidine metabolism; UMP biosynthesis via de novo pathway; orotate from (S)-dihydroorotate (NAD(+) route): step 1/1. In terms of biological role, responsible for channeling the electrons from the oxidation of dihydroorotate from the FMN redox center in the PyrD type B subunit to the ultimate electron acceptor NAD(+). This is Probable dihydroorotate dehydrogenase B (NAD(+)), electron transfer subunit from Thermococcus kodakarensis (strain ATCC BAA-918 / JCM 12380 / KOD1) (Pyrococcus kodakaraensis (strain KOD1)).